A 363-amino-acid chain; its full sequence is Chorismate synthase (363 aa).

The NADP(+) site is built by R48 and R54. Residues 125–127 (RSS), 238–239 (NA), G278, 293–297 (KPTSS), and R319 each bind FMN.

This sequence belongs to the chorismate synthase family. In terms of assembly, homotetramer. FMNH2 is required as a cofactor.

It catalyses the reaction 5-O-(1-carboxyvinyl)-3-phosphoshikimate = chorismate + phosphate. Its pathway is metabolic intermediate biosynthesis; chorismate biosynthesis; chorismate from D-erythrose 4-phosphate and phosphoenolpyruvate: step 7/7. Functionally, catalyzes the anti-1,4-elimination of the C-3 phosphate and the C-6 proR hydrogen from 5-enolpyruvylshikimate-3-phosphate (EPSP) to yield chorismate, which is the branch point compound that serves as the starting substrate for the three terminal pathways of aromatic amino acid biosynthesis. This reaction introduces a second double bond into the aromatic ring system. This Acidithiobacillus ferrooxidans (strain ATCC 23270 / DSM 14882 / CIP 104768 / NCIMB 8455) (Ferrobacillus ferrooxidans (strain ATCC 23270)) protein is Chorismate synthase.